We begin with the raw amino-acid sequence, 163 residues long: UPF0134 protein MPN_139 (163 aa).

This sequence belongs to the UPF0134 family.

The chain is UPF0134 protein MPN_139 from Mycoplasma pneumoniae (strain ATCC 29342 / M129 / Subtype 1) (Mycoplasmoides pneumoniae).